Reading from the N-terminus, the 48-residue chain is Glycine-rich RNA-binding protein 2 (48 aa).

This Populus euphratica (Euphrates poplar) protein is Glycine-rich RNA-binding protein 2.